Consider the following 410-residue polypeptide: Multifunctional CCA protein (410 aa).

2 residues coordinate ATP: Gly8 and Arg11. The CTP site is built by Gly8 and Arg11. Positions 21 and 23 each coordinate Mg(2+). Residues Arg91, Arg137, and Arg140 each coordinate ATP. Residues Arg91, Arg137, and Arg140 each coordinate CTP. The 102-residue stretch at 228–329 folds into the HD domain; it reads TGIHSLMTLR…VKLLEQVDAF (102 aa).

The protein belongs to the tRNA nucleotidyltransferase/poly(A) polymerase family. Bacterial CCA-adding enzyme type 1 subfamily. As to quaternary structure, monomer. Can also form homodimers and oligomers. The cofactor is Mg(2+). Ni(2+) serves as cofactor.

It catalyses the reaction a tRNA precursor + 2 CTP + ATP = a tRNA with a 3' CCA end + 3 diphosphate. The catalysed reaction is a tRNA with a 3' CCA end + 2 CTP + ATP = a tRNA with a 3' CCACCA end + 3 diphosphate. In terms of biological role, catalyzes the addition and repair of the essential 3'-terminal CCA sequence in tRNAs without using a nucleic acid template. Adds these three nucleotides in the order of C, C, and A to the tRNA nucleotide-73, using CTP and ATP as substrates and producing inorganic pyrophosphate. tRNA 3'-terminal CCA addition is required both for tRNA processing and repair. Also involved in tRNA surveillance by mediating tandem CCA addition to generate a CCACCA at the 3' terminus of unstable tRNAs. While stable tRNAs receive only 3'-terminal CCA, unstable tRNAs are marked with CCACCA and rapidly degraded. The chain is Multifunctional CCA protein from Legionella pneumophila subsp. pneumophila (strain Philadelphia 1 / ATCC 33152 / DSM 7513).